A 184-amino-acid chain; its full sequence is ATP synthase subunit b, chloroplastic (184 aa).

A helical membrane pass occupies residues 27–49 (LATNLINLSVVLGVLIFFGKGVL).

This sequence belongs to the ATPase B chain family. F-type ATPases have 2 components, F(1) - the catalytic core - and F(0) - the membrane proton channel. F(1) has five subunits: alpha(3), beta(3), gamma(1), delta(1), epsilon(1). F(0) has four main subunits: a(1), b(1), b'(1) and c(10-14). The alpha and beta chains form an alternating ring which encloses part of the gamma chain. F(1) is attached to F(0) by a central stalk formed by the gamma and epsilon chains, while a peripheral stalk is formed by the delta, b and b' chains.

Its subcellular location is the plastid. The protein resides in the chloroplast thylakoid membrane. F(1)F(0) ATP synthase produces ATP from ADP in the presence of a proton or sodium gradient. F-type ATPases consist of two structural domains, F(1) containing the extramembraneous catalytic core and F(0) containing the membrane proton channel, linked together by a central stalk and a peripheral stalk. During catalysis, ATP synthesis in the catalytic domain of F(1) is coupled via a rotary mechanism of the central stalk subunits to proton translocation. Functionally, component of the F(0) channel, it forms part of the peripheral stalk, linking F(1) to F(0). The sequence is that of ATP synthase subunit b, chloroplastic from Helianthus annuus (Common sunflower).